We begin with the raw amino-acid sequence, 247 residues long: tRNA (guanine-N(1)-)-methyltransferase (247 aa).

S-adenosyl-L-methionine is bound by residues G112 and 131 to 136 (LGDFVL).

Belongs to the RNA methyltransferase TrmD family. As to quaternary structure, homodimer.

Its subcellular location is the cytoplasm. It carries out the reaction guanosine(37) in tRNA + S-adenosyl-L-methionine = N(1)-methylguanosine(37) in tRNA + S-adenosyl-L-homocysteine + H(+). Its function is as follows. Specifically methylates guanosine-37 in various tRNAs. This chain is tRNA (guanine-N(1)-)-methyltransferase, found in Syntrophotalea carbinolica (strain DSM 2380 / NBRC 103641 / GraBd1) (Pelobacter carbinolicus).